Consider the following 519-residue polypeptide: UPF0053 protein bbp_300 (519 aa).

7 consecutive transmembrane segments (helical) span residues 13-35 (LLTL…AILS), 48-70 (LIGL…WMVT), 80-102 (YFSF…FKAT), 123-145 (AGFW…DAII), 150-172 (TINN…LIAS), 185-207 (VVVL…ALGF), and 212-231 (GYLY…NQIA). CBS domains follow at residues 311 to 373 (MTPR…IIDF) and 374 to 434 (SSTT…DADE).

This sequence belongs to the UPF0053 family.

Its subcellular location is the cell membrane. The sequence is that of UPF0053 protein bbp_300 from Buchnera aphidicola subsp. Baizongia pistaciae (strain Bp).